A 259-amino-acid chain; its full sequence is uncharacterized protein (259 aa).

This sequence belongs to the ParA family.

This is an uncharacterized protein from Methanocaldococcus jannaschii (strain ATCC 43067 / DSM 2661 / JAL-1 / JCM 10045 / NBRC 100440) (Methanococcus jannaschii).